The chain runs to 552 residues: Glucose-6-phosphate isomerase (552 aa).

Glutamate 357 acts as the Proton donor in catalysis. Catalysis depends on residues histidine 388 and lysine 516. A disordered region spans residues 525–552; the sequence is ELASTKPPKHDSSTNALIERYRTRGCRS.

It belongs to the GPI family.

Its subcellular location is the cytoplasm. The enzyme catalyses alpha-D-glucose 6-phosphate = beta-D-fructose 6-phosphate. It participates in carbohydrate biosynthesis; gluconeogenesis. It functions in the pathway carbohydrate degradation; glycolysis; D-glyceraldehyde 3-phosphate and glycerone phosphate from D-glucose: step 2/4. Its function is as follows. Catalyzes the reversible isomerization of glucose-6-phosphate to fructose-6-phosphate. This chain is Glucose-6-phosphate isomerase, found in Laribacter hongkongensis (strain HLHK9).